The sequence spans 417 residues: Serine hydroxymethyltransferase (417 aa).

Residues Leu116 and 120 to 122 (GHL) contribute to the (6S)-5,6,7,8-tetrahydrofolate site. Lys225 bears the N6-(pyridoxal phosphate)lysine mark. (6S)-5,6,7,8-tetrahydrofolate is bound at residue 350–352 (SPF).

Belongs to the SHMT family. In terms of assembly, homodimer. Requires pyridoxal 5'-phosphate as cofactor.

The protein resides in the cytoplasm. It carries out the reaction (6R)-5,10-methylene-5,6,7,8-tetrahydrofolate + glycine + H2O = (6S)-5,6,7,8-tetrahydrofolate + L-serine. The protein operates within one-carbon metabolism; tetrahydrofolate interconversion. It participates in amino-acid biosynthesis; glycine biosynthesis; glycine from L-serine: step 1/1. Its function is as follows. Catalyzes the reversible interconversion of serine and glycine with tetrahydrofolate (THF) serving as the one-carbon carrier. This reaction serves as the major source of one-carbon groups required for the biosynthesis of purines, thymidylate, methionine, and other important biomolecules. Also exhibits THF-independent aldolase activity toward beta-hydroxyamino acids, producing glycine and aldehydes, via a retro-aldol mechanism. The protein is Serine hydroxymethyltransferase of Ligilactobacillus salivarius (strain UCC118) (Lactobacillus salivarius).